The following is an 897-amino-acid chain: Protein transport protein SEC24-1 (897 aa).

Zn(2+)-binding residues include cysteine 213, cysteine 216, cysteine 235, and cysteine 238. The zinc finger-like stretch occupies residues 213–238 (CRRCRSYINPFAKFIEQGRRWRCNFC).

This sequence belongs to the SEC23/SEC24 family. SEC24 subfamily. The COPII coat is composed of at least 5 proteins: the SEC23/24 complex, the SEC13/31 complex, and the protein SAR1. Golgi apparatus membrane; Peripheral membrane protein; Cytoplasmic side.

The protein resides in the cytoplasm. The protein localises to the cytoplasmic vesicle. Its subcellular location is the COPII-coated vesicle membrane. It localises to the endoplasmic reticulum membrane. It is found in the golgi apparatus membrane. Its function is as follows. Component of the coat protein complex II (COPII) which promotes the formation of transport vesicles from the endoplasmic reticulum (ER). The coat has two main functions, the physical deformation of the endoplasmic reticulum membrane into vesicles and the selection of cargo molecules. This chain is Protein transport protein SEC24-1 (SEC241), found in Candida glabrata (strain ATCC 2001 / BCRC 20586 / JCM 3761 / NBRC 0622 / NRRL Y-65 / CBS 138) (Yeast).